The primary structure comprises 148 residues: Large ribosomal subunit protein bL9 (148 aa).

The protein belongs to the bacterial ribosomal protein bL9 family.

In terms of biological role, binds to the 23S rRNA. The protein is Large ribosomal subunit protein bL9 of Chloroflexus aurantiacus (strain ATCC 29366 / DSM 635 / J-10-fl).